The chain runs to 670 residues: DNA ligase (670 aa).

Residues 32–36, 81–82, and glutamate 113 contribute to the NAD(+) site; these read DAEYD and SL. Catalysis depends on lysine 115, which acts as the N6-AMP-lysine intermediate. NAD(+) is bound by residues arginine 136, glutamate 173, lysine 290, and lysine 314. The Zn(2+) site is built by cysteine 408, cysteine 411, cysteine 426, and cysteine 432. The BRCT domain occupies 592–670; sequence ESDSPFAGKT…EAEMIRLLGE (79 aa).

This sequence belongs to the NAD-dependent DNA ligase family. LigA subfamily. It depends on Mg(2+) as a cofactor. The cofactor is Mn(2+).

It catalyses the reaction NAD(+) + (deoxyribonucleotide)n-3'-hydroxyl + 5'-phospho-(deoxyribonucleotide)m = (deoxyribonucleotide)n+m + AMP + beta-nicotinamide D-nucleotide.. In terms of biological role, DNA ligase that catalyzes the formation of phosphodiester linkages between 5'-phosphoryl and 3'-hydroxyl groups in double-stranded DNA using NAD as a coenzyme and as the energy source for the reaction. It is essential for DNA replication and repair of damaged DNA. In Yersinia pestis bv. Antiqua (strain Antiqua), this protein is DNA ligase.